We begin with the raw amino-acid sequence, 242 residues long: Myogenic factor 6 (242 aa).

The segment at 31–63 (SPLYPGSDGTLSPCQDQMPPEAGSDSSGEEHVL) is disordered. One can recognise a bHLH domain in the interval 93–144 (DRRKAATLRERRRLKKINEAFEALKRRTVANPNQRLPKVEILRSAISYIERL).

In terms of assembly, efficient DNA binding requires dimerization with another bHLH protein. Interacts with CSRP3. Skeletal muscle.

It is found in the nucleus. Functionally, involved in muscle differentiation (myogenic factor). Induces fibroblasts to differentiate into myoblasts. Probable sequence specific DNA-binding protein. This is Myogenic factor 6 (MYF6) from Homo sapiens (Human).